A 533-amino-acid chain; its full sequence is MQRDTERAAQLSPSSEDEALVLRQKPLEMPAQEEDSTTLQQWKARQLQRLAEELKAEWQEARLQQVRQAERLYLSHLLDEAAERSMGNDPSVHEQNQRRTAKHTRAKERNRAAFREERGRREEHPRQHPKSRKKAPCSERRSSAKARGPASGEKGKRRRVSSSKDHDGYQGPRVTRRVGVAKLNPFFDGDTDCMEDVQKEFFREGRRPSAKGTHNLRDQSLQGKTTALTQPLLHGPTCKQEAAAQEPPSKYNKNLWHKEIESTFEELFNMNRKLKKHLNLHLEQRLKADQNPDEQQSYSEIRSETFGTPREERTEEVETAEESGSPTEVETTEMWSKVNLKQILSDSEYPRYQQIAKYPLKSESLVPVKAGTSREQDDLLSLSPESGQEPPKSPLLEDESLKPYLQKQADSVASWMALRQKQKAELEQRRQKALLELTEHPNMSLEIHYKAELEEERRARRRMRLALLKSNSTGICALPPDRNNLSLDNGLLDEDKQNQMIRDLQQQILEQNKLHQEFLEKARKRLQEFQKSF.

Disordered stretches follow at residues 1-40 (MQRDTERAAQLSPSSEDEALVLRQKPLEMPAQEEDSTTLQ), 84-176 (RSMG…RVTR), 286-333 (LKAD…ETTE), and 370-399 (AGTSREQDDLLSLSPESGQEPPKSPLLEDE). Residues 40-72 (QQWKARQLQRLAEELKAEWQEARLQQVRQAERL) are a coiled coil. The segment covering 107-126 (KERNRAAFREERGRREEHPR) has biased composition (basic and acidic residues). A coiled-coil region spans residues 416 to 531 (MALRQKQKAE…ARKRLQEFQK (116 aa)).

As to expression, expressed in mature spermatozoa (at protein level). Detected in retina, lung and kidney. In brain, highly expressed in brain-stem, cerebral cortex and thalamus with lesser expression in cerebellum and hippocampus.

It localises to the cell projection. It is found in the cilium. The protein is CEP295 N-terminal-like protein of Mus musculus (Mouse).